A 100-amino-acid chain; its full sequence is MAEPDFNEIMAQAQQMQEELQRVQGEIAQSEISGSAGNGLVKVTMKGTGEVTNVTIDKSVVDPDDVDTLQDLVLGALQDANTALQSYAQEKMGPFSQALG.

The protein belongs to the YbaB/EbfC family. In terms of assembly, homodimer.

The protein localises to the cytoplasm. It is found in the nucleoid. In terms of biological role, binds to DNA and alters its conformation. May be involved in regulation of gene expression, nucleoid organization and DNA protection. This chain is Nucleoid-associated protein ckrop_0143, found in Corynebacterium kroppenstedtii (strain DSM 44385 / JCM 11950 / CIP 105744 / CCUG 35717).